The sequence spans 335 residues: Hsp90 co-chaperone Cdc37-like 1 (335 aa).

A compositionally biased stretch (pro residues) spans 1-11 (MEQPWPPPGPW). Residues 1 to 42 (MEQPWPPPGPWSFPRTGGETEEESDLDVSPSSSHYSPVPDGG) form a disordered region. A self-association region spans residues 2–170 (EQPWPPPGPW…YEQKIRHFGM (169 aa)). Over residues 27-40 (DVSPSSSHYSPVPD) the composition is skewed to low complexity. A phosphoserine mark is found at Ser-32 and Ser-88. Residues 84-120 (HNSESLDQEHAKAQTAVSELRQREEEWRQKEEALVQR) adopt a coiled-coil conformation. Residues 147–276 (KTEEEDKSQS…SRVRLYAQSQ (130 aa)) are self-association and interaction with Hsp90. An interaction with Hsp70 region spans residues 266–335 (KSRVRLYAQS…EDDDRMMDTV (70 aa)). The interval 277 to 335 (SLQPVTVQNHVPHSGVGCIGSLESLPQNPDSLQCCTPAPLCSVDSVVHKEDDDRMMDTV) is required for interaction with STIP1.

It belongs to the CDC37 family. Self-associates. Forms complexes with Hsp70 and Hsp90. Interacts with CDC37, FKBP4, PPID and STIP1.

The protein resides in the cytoplasm. In terms of biological role, co-chaperone that binds to numerous proteins and promotes their interaction with Hsp70 and Hsp90. In Mus musculus (Mouse), this protein is Hsp90 co-chaperone Cdc37-like 1 (Cdc37l1).